Here is a 217-residue protein sequence, read N- to C-terminus: Probable GTP-binding protein EngB (217 aa).

The 185-residue stretch at 29 to 213 folds into the EngB-type G domain; it reads GPPEVAFAGR…RQAIAETVGI (185 aa). GTP-binding positions include 37–44, 64–68, 91–94, 158–161, and 192–194; these read GRSNVGKS, GRTQE, DMPG, TKTD, and TSS. 2 residues coordinate Mg(2+): Ser44 and Thr66.

The protein belongs to the TRAFAC class TrmE-Era-EngA-EngB-Septin-like GTPase superfamily. EngB GTPase family. The cofactor is Mg(2+).

Necessary for normal cell division and for the maintenance of normal septation. The sequence is that of Probable GTP-binding protein EngB from Rhizobium etli (strain ATCC 51251 / DSM 11541 / JCM 21823 / NBRC 15573 / CFN 42).